A 488-amino-acid chain; its full sequence is UDP-N-acetylmuramoyl-L-alanyl-D-glutamate--2,6-diaminopimelate ligase (488 aa).

Ser31 is a UDP-N-acetyl-alpha-D-muramoyl-L-alanyl-D-glutamate binding site. 109 to 115 (GTNGKTS) contacts ATP. Residues Asn150, 151-152 (TT), Ser178, and Arg186 each bind UDP-N-acetyl-alpha-D-muramoyl-L-alanyl-D-glutamate. Lys218 is modified (N6-carboxylysine). Meso-2,6-diaminopimelate is bound by residues Arg384, 408–411 (DNPR), Gly458, and Glu462. The short motif at 408-411 (DNPR) is the Meso-diaminopimelate recognition motif element.

Belongs to the MurCDEF family. MurE subfamily. Requires Mg(2+) as cofactor. Carboxylation is probably crucial for Mg(2+) binding and, consequently, for the gamma-phosphate positioning of ATP.

Its subcellular location is the cytoplasm. It carries out the reaction UDP-N-acetyl-alpha-D-muramoyl-L-alanyl-D-glutamate + meso-2,6-diaminopimelate + ATP = UDP-N-acetyl-alpha-D-muramoyl-L-alanyl-gamma-D-glutamyl-meso-2,6-diaminopimelate + ADP + phosphate + H(+). It participates in cell wall biogenesis; peptidoglycan biosynthesis. Catalyzes the addition of meso-diaminopimelic acid to the nucleotide precursor UDP-N-acetylmuramoyl-L-alanyl-D-glutamate (UMAG) in the biosynthesis of bacterial cell-wall peptidoglycan. The sequence is that of UDP-N-acetylmuramoyl-L-alanyl-D-glutamate--2,6-diaminopimelate ligase from Bacillus licheniformis (strain ATCC 14580 / DSM 13 / JCM 2505 / CCUG 7422 / NBRC 12200 / NCIMB 9375 / NCTC 10341 / NRRL NRS-1264 / Gibson 46).